The primary structure comprises 98 residues: UPF0251 protein Sbal_3699 (98 aa).

Belongs to the UPF0251 family.

This Shewanella baltica (strain OS155 / ATCC BAA-1091) protein is UPF0251 protein Sbal_3699.